We begin with the raw amino-acid sequence, 241 residues long: DnaJ homolog subfamily C member 4 (241 aa).

One can recognise a J domain in the interval Thr-34–Leu-99. The segment covering Arg-88–Leu-99 has biased composition (basic and acidic residues). The tract at residues Arg-88 to Ala-129 is disordered. Residues Gln-119–Ala-129 show a composition bias toward polar residues. The chain crosses the membrane as a helical span at residues Val-156 to Phe-175. The disordered stretch occupies residues Gln-212–Pro-241.

The protein resides in the membrane. This Homo sapiens (Human) protein is DnaJ homolog subfamily C member 4 (DNAJC4).